We begin with the raw amino-acid sequence, 435 residues long: Large ribosomal subunit protein mL65 (435 aa).

Belongs to the mitochondrion-specific ribosomal protein mL65 family. In terms of assembly, component of the mitochondrial ribosome small subunit (28S) which comprises a 12S rRNA and about 30 distinct proteins.

The protein resides in the mitochondrion. This Bos taurus (Bovine) protein is Large ribosomal subunit protein mL65 (MRPS30).